A 220-amino-acid chain; its full sequence is Elongation factor Ts (220 aa).

Positions 83–86 (TDFV) are involved in Mg(2+) ion dislocation from EF-Tu.

The protein belongs to the EF-Ts family.

It is found in the cytoplasm. Its function is as follows. Associates with the EF-Tu.GDP complex and induces the exchange of GDP to GTP. It remains bound to the aminoacyl-tRNA.EF-Tu.GTP complex up to the GTP hydrolysis stage on the ribosome. The chain is Elongation factor Ts from Synechococcus sp. (strain CC9605).